Reading from the N-terminus, the 527-residue chain is Tyrosine-protein kinase TXK (527 aa).

The tract at residues 58 to 81 (TQSNRGGVQPSKRKPLPPLPQEPP) is disordered. The SH3 domain maps to 82–142 (DERIQVKALY…PSNYVTENRL (61 aa)). Tyr91 carries the phosphotyrosine; by autocatalysis modification. The SH2 domain occupies 150-246 (WYHKNITRNQ…GLISRLRYPI (97 aa)). Residues 271–527 (LAFVKEIGSG…QVLTEIAETW (257 aa)) enclose the Protein kinase domain. Residues 277–285 (IGSGQFGVV) and Lys299 contribute to the ATP site. Catalysis depends on Asp390, which acts as the Proton acceptor. Tyr420 carries the phosphotyrosine; by FYN and autocatalysis modification.

Belongs to the protein kinase superfamily. Tyr protein kinase family. TEC subfamily. As to quaternary structure, interacts with PARP1 and EEF1A1. Interacts with SH2D2A. Interacts with FYN. Post-translationally, phosphorylated at Tyr-420 by FYN. Autophosphorylation at Tyr-91 is critical for the activation of TXK, leading to the up-regulation of IFN-gamma gene transcription. The cysteine string at the N-terminus is palmitoylated and required for the proper subcellular location. In terms of tissue distribution, expressed in early thymocytes, T-cells and mast cells.

It is found in the cytoplasm. The protein localises to the nucleus. Its subcellular location is the cell membrane. It catalyses the reaction L-tyrosyl-[protein] + ATP = O-phospho-L-tyrosyl-[protein] + ADP + H(+). Its activity is regulated as follows. Activated by phosphorylation by FYN. Functionally, non-receptor tyrosine kinase that plays a redundant role with ITK in regulation of the adaptive immune response. Regulates the development, function and differentiation of conventional T-cells and nonconventional NKT-cells. When antigen presenting cells (APC) activate T-cell receptor (TCR), a series of phosphorylation leads to the recruitment of TXK to the cell membrane, where it is phosphorylated at Tyr-420. Phosphorylation leads to TXK full activation. Also contributes to signaling from many receptors and participates in multiple downstream pathways, including regulation of the actin cytoskeleton. Like ITK, can phosphorylate PLCG1, leading to its localization in lipid rafts and activation, followed by subsequent cleavage of its substrates. In turn, the endoplasmic reticulum releases calcium in the cytoplasm and the nuclear activator of activated T-cells (NFAT) translocates into the nucleus to perform its transcriptional duty. Plays a role in the positive regulation of IFNG transcription in T-helper 1 cells as part of an IFNG promoter-binding complex with PARP1 and EEF1A1. Within the complex, phosphorylates both PARP1 and EEF1A1. Also phosphorylates key sites in LCP2 leading to the up-regulation of Th1 preferred cytokine IL-2. Phosphorylates 'Tyr-201' of CTLA4 which leads to the association of PI-3 kinase with the CTLA4 receptor. The sequence is that of Tyrosine-protein kinase TXK (Txk) from Mus musculus (Mouse).